Here is a 391-residue protein sequence, read N- to C-terminus: 2,4,6-trihydroxybenzophenone synthase (391 aa).

Cysteine 165 is an active-site residue.

The protein belongs to the thiolase-like superfamily. Chalcone/stilbene synthases family. Homodimer. As to expression, expressed in young fruit pericarp.

It carries out the reaction benzoyl-CoA + 3 malonyl-CoA + 2 H(+) = 2,4,6-trihydroxybenzophenone + 3 CO2 + 4 CoA. Type III polyketide synthase involved in the biosynthesis of benzophenones and xanthones. Produces mainly 2,4,6-trihydroxybenzophenone together with minor amounts of tetraketide lactone, triketide lactone and diketide lactone. The preferred substrate is benzoyl-CoA, but can also use acetyl-CoA, phenylacetyl-CoA, hexanoyl-CoA, cinnamoyl-CoA, p-coumaroyl-CoA and salicoyl-CoA. The chain is 2,4,6-trihydroxybenzophenone synthase (BPS) from Garcinia mangostana (Mangosteen).